The primary structure comprises 509 residues: Cobyric acid synthase (509 aa).

The 198-residue stretch at 262–459 folds into the GATase cobBQ-type domain; that stretch reads EIKVGIIKLP…IHGIFENDSW (198 aa). Cys343 (nucleophile) is an active-site residue. Residue His451 is part of the active site.

It belongs to the CobB/CobQ family. CobQ subfamily.

It functions in the pathway cofactor biosynthesis; adenosylcobalamin biosynthesis. Functionally, catalyzes amidations at positions B, D, E, and G on adenosylcobyrinic A,C-diamide. NH(2) groups are provided by glutamine, and one molecule of ATP is hydrogenolyzed for each amidation. The polypeptide is Cobyric acid synthase (Prochlorococcus marinus (strain MIT 9301)).